A 441-amino-acid polypeptide reads, in one-letter code: Ribosomal protein uS12 methylthiotransferase RimO (441 aa).

One can recognise an MTTase N-terminal domain in the interval 8-118 (PKIGFVSLGC…VLQHVHHYVP (111 aa)). [4Fe-4S] cluster-binding residues include C17, C53, C82, C150, C154, and C157. One can recognise a Radical SAM core domain in the interval 136-373 (LTPRHYAYLK…MQLQQQISAE (238 aa)). Residues 376-441 (QEKVGREILV…DEYDLWGSRV (66 aa)) enclose the TRAM domain.

This sequence belongs to the methylthiotransferase family. RimO subfamily. The cofactor is [4Fe-4S] cluster.

The protein resides in the cytoplasm. It catalyses the reaction L-aspartate(89)-[ribosomal protein uS12]-hydrogen + (sulfur carrier)-SH + AH2 + 2 S-adenosyl-L-methionine = 3-methylsulfanyl-L-aspartate(89)-[ribosomal protein uS12]-hydrogen + (sulfur carrier)-H + 5'-deoxyadenosine + L-methionine + A + S-adenosyl-L-homocysteine + 2 H(+). In terms of biological role, catalyzes the methylthiolation of an aspartic acid residue of ribosomal protein uS12. This chain is Ribosomal protein uS12 methylthiotransferase RimO, found in Salmonella agona (strain SL483).